We begin with the raw amino-acid sequence, 204 residues long: Holliday junction branch migration complex subunit RuvA (204 aa).

The tract at residues 1-64 (MIARLRGTLL…EDGQTLFGFR (64 aa)) is domain I. The segment at 65 to 143 (TRAERDLFRR…GVGGGSTAAP (79 aa)) is domain II. Positions 144 to 153 (AAGADHPTGE) are flexible linker. Residues 153-204 (ENDPVSEAIEGLVALGYKPPEAARMARNAAEPELGCEAIIRRALQRAVPRGG) form a domain III region.

It belongs to the RuvA family. In terms of assembly, homotetramer. Forms an RuvA(8)-RuvB(12)-Holliday junction (HJ) complex. HJ DNA is sandwiched between 2 RuvA tetramers; dsDNA enters through RuvA and exits via RuvB. An RuvB hexamer assembles on each DNA strand where it exits the tetramer. Each RuvB hexamer is contacted by two RuvA subunits (via domain III) on 2 adjacent RuvB subunits; this complex drives branch migration. In the full resolvosome a probable DNA-RuvA(4)-RuvB(12)-RuvC(2) complex forms which resolves the HJ.

Its subcellular location is the cytoplasm. Its function is as follows. The RuvA-RuvB-RuvC complex processes Holliday junction (HJ) DNA during genetic recombination and DNA repair, while the RuvA-RuvB complex plays an important role in the rescue of blocked DNA replication forks via replication fork reversal (RFR). RuvA specifically binds to HJ cruciform DNA, conferring on it an open structure. The RuvB hexamer acts as an ATP-dependent pump, pulling dsDNA into and through the RuvAB complex. HJ branch migration allows RuvC to scan DNA until it finds its consensus sequence, where it cleaves and resolves the cruciform DNA. This chain is Holliday junction branch migration complex subunit RuvA, found in Halorhodospira halophila (strain DSM 244 / SL1) (Ectothiorhodospira halophila (strain DSM 244 / SL1)).